The primary structure comprises 484 residues: tRNA nucleotidyltransferase cca2 (484 aa).

Residues 122–124 carry the B/A element motif; sequence RAE. The tract at residues 125–142 is flexible loop; the sequence is SYDDKSRIPSVTPGTVET. Positions 234–244 match the ERhxxExxxhh motif motif; the sequence is ERVGEEIEKML.

It belongs to the tRNA nucleotidyltransferase/poly(A) polymerase family.

The protein localises to the cytoplasm. The enzyme catalyses a tRNA with a 3' CC end + ATP = a tRNA with a 3' CCA end + diphosphate. TRNA nucleotidyltransferase involved in the synthesis of the tRNA CCA terminus. In contrast to what is usually observed in eukaryotes for which one enzyme synthesizes the whole tRNA CCA terminus, in S.pombe, cca1 specifically adds two cytidine residues to a tRNA substrate lacking this sequence while cca2 specifically adds the terminal adenosine residue thereby completing the CCA sequence. The polypeptide is tRNA nucleotidyltransferase cca2 (Schizosaccharomyces pombe (strain 972 / ATCC 24843) (Fission yeast)).